Here is a 175-residue protein sequence, read N- to C-terminus: Bifunctional protein PyrR (175 aa).

The short motif at 98-110 is the PRPP-binding element; that stretch reads VIIIDDVLYTGRT.

Belongs to the purine/pyrimidine phosphoribosyltransferase family. PyrR subfamily. In terms of assembly, homodimer and homohexamer; in equilibrium.

The catalysed reaction is UMP + diphosphate = 5-phospho-alpha-D-ribose 1-diphosphate + uracil. Its function is as follows. Regulates transcriptional attenuation of the pyrimidine nucleotide (pyr) operon by binding in a uridine-dependent manner to specific sites on pyr mRNA. This disrupts an antiterminator hairpin in the RNA and favors formation of a downstream transcription terminator, leading to a reduced expression of downstream genes. Functionally, also displays a weak uracil phosphoribosyltransferase activity which is not physiologically significant. In Staphylococcus aureus (strain bovine RF122 / ET3-1), this protein is Bifunctional protein PyrR.